The primary structure comprises 60 residues: Cytotoxin SP15d (60 aa).

Intrachain disulfides connect Cys3-Cys21, Cys14-Cys38, Cys42-Cys53, and Cys54-Cys59.

Belongs to the three-finger toxin family. Short-chain subfamily. Type IA cytotoxin sub-subfamily. Monomer in solution; Homodimer and oligomer in the presence of negatively charged lipids forming a pore with a size ranging between 20 and 30 Angstroms. Expressed by the venom gland.

It localises to the secreted. It is found in the target cell membrane. Functionally, shows cytolytic activity on many different cells by forming pore in lipid membranes. In vivo, increases heart rate or kills the animal by cardiac arrest. In addition, it binds to heparin with high affinity, interacts with Kv channel-interacting protein 1 (KCNIP1) in a calcium-independent manner, and binds to integrin alpha-V/beta-3 (ITGAV/ITGB3) with moderate affinity. In Naja atra (Chinese cobra), this protein is Cytotoxin SP15d.